Here is a 53-residue protein sequence, read N- to C-terminus: Large ribosomal subunit protein bL33 (53 aa).

The protein belongs to the bacterial ribosomal protein bL33 family.

This chain is Large ribosomal subunit protein bL33, found in Malacoplasma penetrans (strain HF-2) (Mycoplasma penetrans).